A 314-amino-acid polypeptide reads, in one-letter code: RNA 2'-O-methyltransferase FBLL1 (314 aa).

A compositionally biased stretch (gly residues) spans 1-59; the sequence is MKPAGGRGGWGWGGGKGGSKGGDTGSGTKGGFGARTRGSSGGGRGRGRGGGGGGGGGGG. The disordered stretch occupies residues 1–82; it reads MKPAGGRGGW…RRKKGITVSV (82 aa). Arg7 is subject to Omega-N-methylarginine. Residues 64–77 show a composition bias toward basic residues; the sequence is RGGPGKNKNRRKKG. S-adenosyl-L-methionine is bound by residues 166-167, 185-186, 210-211, and 230-233; these read TT, EF, DA, and DVAQ.

The protein belongs to the methyltransferase superfamily. Fibrillarin family. Component of a box C/D small nucleolar ribonucleoprotein (snoRNP) complex composed of FBLL1, SNU13/NHP2L1, NOP56 and NOP58 and a guide snoRNA which mediates 2'-hydroxyl ribose methylation in RNAs.

The protein resides in the nucleus. It is found in the nucleolus. It carries out the reaction a ribonucleotide in RNA + S-adenosyl-L-methionine = a 2'-O-methylribonucleotide in RNA + S-adenosyl-L-homocysteine + H(+). Functionally, S-adenosyl-L-methionine-dependent RNA methyltransferase that catalyzes 2'-hydroxyl ribose methylation in RNAs. Functions as part of box C/D small nucleolar ribonucleoprotein (snoRNP) complexes, where guide snoRNAs ensure methylation specificity through base pairing with RNA substrates. Exhibits broad substrate specificity, methylating multiple sites on ribosomal RNAs (rRNAs) and messenger RNAs (mRNAs) depending on the guide snoRNA incorporated in the complex. Specifically expressed in brain, it regulates the expression of GAP43 by stabilizing its mRNA through methylation and thereby plays an indirect role in neuronal differentiation. This Mus musculus (Mouse) protein is RNA 2'-O-methyltransferase FBLL1.